The following is an 828-amino-acid chain: Putative dual specificity tyrosine-phosphorylation-regulated kinase 3 homolog (828 aa).

Basic and acidic residues predominate over residues 1 to 14 (MVGSQEKKNNHIEL). Residues 1 to 26 (MVGSQEKKNNHIELSETPATDKNNLN) are disordered. Polar residues predominate over residues 17-26 (TPATDKNNLN). The Protein kinase domain maps to 276–589 (YEMLKIIGKG…PSEALKHPWL (314 aa)). ATP-binding positions include 282-290 (IGKGSFGQV) and lysine 305. Aspartate 402 (proton acceptor) is an active-site residue. Phosphoserine is present on serine 616.

It belongs to the protein kinase superfamily. CMGC Ser/Thr protein kinase family. MNB/DYRK subfamily. Autophosphorylated on tyrosine residues.

It catalyses the reaction L-seryl-[protein] + ATP = O-phospho-L-seryl-[protein] + ADP + H(+). The enzyme catalyses L-threonyl-[protein] + ATP = O-phospho-L-threonyl-[protein] + ADP + H(+). It carries out the reaction L-tyrosyl-[protein] + ATP = O-phospho-L-tyrosyl-[protein] + ADP + H(+). The polypeptide is Putative dual specificity tyrosine-phosphorylation-regulated kinase 3 homolog (Dyrk3) (Drosophila melanogaster (Fruit fly)).